A 273-amino-acid polypeptide reads, in one-letter code: MAKHLYKTPIPSTRKGTIDRQVKSNPRNNLIHGRHRCGKGRNSRGIITARHRGGGHKRLYRKIDFRRNQKDISGRIVTIEYDPNRNAYICLIHYGDGEKGYILHPRGAIIGDTIVSGTKVPISMGNALPLTDMPLGTAIHNIEITRGRGGQLARAAGAVAKLIAKEGKSATLRLPSGEVRLVSQNCLATVGQVGNVGVNQKSLGRAGSKCWLGKRPVVRGVVMNPVDHPHGGGEGKAPIGRKKPTTPWGYPALGRRTRKRKKYSDSFILRRRK.

Disordered stretches follow at residues 1-20 (MAKHLYKTPIPSTRKGTIDR) and 225-273 (PVDH…RRRK).

Belongs to the universal ribosomal protein uL2 family. In terms of assembly, part of the 50S ribosomal subunit.

The protein localises to the plastid. The protein resides in the chloroplast. The protein is Large ribosomal subunit protein uL2cz/uL2cy (rpl2-A) of Oryza nivara (Indian wild rice).